The primary structure comprises 426 residues: Serine--tRNA ligase (426 aa).

231–233 (TLE) contacts L-serine. Residue 262–264 (RSE) participates in ATP binding. Glu285 is an L-serine binding site. 349-352 (EISS) contributes to the ATP binding site. Position 385 (Ser385) interacts with L-serine.

It belongs to the class-II aminoacyl-tRNA synthetase family. Type-1 seryl-tRNA synthetase subfamily. As to quaternary structure, homodimer. The tRNA molecule binds across the dimer.

The protein localises to the cytoplasm. It carries out the reaction tRNA(Ser) + L-serine + ATP = L-seryl-tRNA(Ser) + AMP + diphosphate + H(+). The enzyme catalyses tRNA(Sec) + L-serine + ATP = L-seryl-tRNA(Sec) + AMP + diphosphate + H(+). The protein operates within aminoacyl-tRNA biosynthesis; selenocysteinyl-tRNA(Sec) biosynthesis; L-seryl-tRNA(Sec) from L-serine and tRNA(Sec): step 1/1. Functionally, catalyzes the attachment of serine to tRNA(Ser). Is also able to aminoacylate tRNA(Sec) with serine, to form the misacylated tRNA L-seryl-tRNA(Sec), which will be further converted into selenocysteinyl-tRNA(Sec). This chain is Serine--tRNA ligase, found in Malacoplasma penetrans (strain HF-2) (Mycoplasma penetrans).